A 199-amino-acid chain; its full sequence is Protein GrpE (199 aa).

Residues 1 to 27 (MSEQNTNHESPEQNVAHDNIEHSDSIL) form a disordered region. A compositionally biased stretch (basic and acidic residues) spans 18 to 27 (DNIEHSDSIL).

It belongs to the GrpE family. In terms of assembly, homodimer.

Its subcellular location is the cytoplasm. Participates actively in the response to hyperosmotic and heat shock by preventing the aggregation of stress-denatured proteins, in association with DnaK and GrpE. It is the nucleotide exchange factor for DnaK and may function as a thermosensor. Unfolded proteins bind initially to DnaJ; upon interaction with the DnaJ-bound protein, DnaK hydrolyzes its bound ATP, resulting in the formation of a stable complex. GrpE releases ADP from DnaK; ATP binding to DnaK triggers the release of the substrate protein, thus completing the reaction cycle. Several rounds of ATP-dependent interactions between DnaJ, DnaK and GrpE are required for fully efficient folding. The protein is Protein GrpE of Psychrobacter sp. (strain St1).